Reading from the N-terminus, the 215-residue chain is Somatotropin (215 aa).

An N-terminal signal peptide occupies residues M1–A25. H44 contacts Zn(2+). C77 and C188 are joined by a disulfide. Residue S130 is modified to Phosphoserine. A Zn(2+)-binding site is contributed by E197. An intrachain disulfide couples C205 to C213.

This sequence belongs to the somatotropin/prolactin family.

The protein localises to the secreted. Its function is as follows. Plays an important role in growth control. Its major role in stimulating body growth is to stimulate the liver and other tissues to secrete IGF1. It stimulates both the differentiation and proliferation of myoblasts. It also stimulates amino acid uptake and protein synthesis in muscle and other tissues. This is Somatotropin (GH1) from Trichosurus vulpecula (Brush-tailed possum).